Consider the following 304-residue polypeptide: Protein BOBBER 1 (304 aa).

Position 2 is an N-acetylalanine (A2). Positions 54 to 106 (EDEIVVAVRAAKEKLKKAEKKKAEKESVKPVEKKAEKEIVKLVEKKVEKESVK) form a coiled coil. A disordered region spans residues 111 to 141 (ASSAEPIEVEKPKEEEEKKESGPIVPNKGNG). The segment covering 118-131 (EVEKPKEEEEKKES) has biased composition (basic and acidic residues). The 90-residue stretch at 142-231 (TDLENYSWIQ…DQMEWWKCCV (90 aa)) folds into the CS domain.

In terms of tissue distribution, expressed in all seedling tissues with highest expression levels at the root tip.

The protein resides in the cytoplasm. The protein localises to the cytoplasmic granule. Functionally, small heat shock protein required for the establishment of auxin gradients and for patterning of the apical domain of the embryo. Involved in the specification of the cotyledon primordia. Also required for normal inflorescence and floral meristem function, normal developmental patterning and thermotolerance. Acts as a molecular chaperone. The polypeptide is Protein BOBBER 1 (BOB1) (Arabidopsis thaliana (Mouse-ear cress)).